The chain runs to 223 residues: Protein-L-isoaspartate O-methyltransferase (223 aa).

Residue Ser70 is part of the active site.

The protein belongs to the methyltransferase superfamily. L-isoaspartyl/D-aspartyl protein methyltransferase family.

The protein localises to the cytoplasm. The catalysed reaction is [protein]-L-isoaspartate + S-adenosyl-L-methionine = [protein]-L-isoaspartate alpha-methyl ester + S-adenosyl-L-homocysteine. Its function is as follows. Catalyzes the methyl esterification of L-isoaspartyl residues in peptides and proteins that result from spontaneous decomposition of normal L-aspartyl and L-asparaginyl residues. It plays a role in the repair and/or degradation of damaged proteins. The protein is Protein-L-isoaspartate O-methyltransferase of Saccharophagus degradans (strain 2-40 / ATCC 43961 / DSM 17024).